A 232-amino-acid polypeptide reads, in one-letter code: Phosphoadenosine 5'-phosphosulfate reductase (232 aa).

Cys228 acts as the Nucleophile; cysteine thiosulfonate intermediate in catalysis.

It belongs to the PAPS reductase family. CysH subfamily.

It localises to the cytoplasm. The enzyme catalyses [thioredoxin]-disulfide + sulfite + adenosine 3',5'-bisphosphate + 2 H(+) = [thioredoxin]-dithiol + 3'-phosphoadenylyl sulfate. It participates in sulfur metabolism; hydrogen sulfide biosynthesis; sulfite from sulfate: step 3/3. Its function is as follows. Catalyzes the formation of sulfite from phosphoadenosine 5'-phosphosulfate (PAPS) using thioredoxin as an electron donor. This is Phosphoadenosine 5'-phosphosulfate reductase from Synechococcus sp. (strain ATCC 27144 / PCC 6301 / SAUG 1402/1) (Anacystis nidulans).